Here is a 667-residue protein sequence, read N- to C-terminus: Gamma-tubulin complex component 4 (667 aa).

The tract at residues 425–445 (HKADATQAREGPSRETSPREA) is disordered.

This sequence belongs to the TUBGCP family. In terms of assembly, component of the gamma-tubulin ring complex (gTuRC) consisting of TUBGCP2, TUBGCP3, TUBGCP4, TUBGCP5 and TUBGCP6 and gamma-tubulin TUBG1 or TUBG2. TUBGCP2, TUBGCP3, TUBGCP4, TUBGCP5 and TUBGCP6 assemble in a 5:5:2:1:1 stoichiometry; each is associated with a gamma-tubulin, thereby arranging 14 gamma-tubulins in a helical manner. Gamma-tubulin at the first position is blocked by TUBGCP3 at the last position, allowing 13 protafilaments to grow into a microtubule. The gTuRC (via TUBGCP3 and TUBGCP6) interacts with ACTB and MZT1; the interactions form a luminal bridge that stabilizes the initial structure during complex assembly. The gTuRC (via TUBGCP2) interacts with MZT2A/MZT2B and CDK5RAP2 (via CM1 motif); the interactions play a role in gTuRC activation. Interacts with NINL. Interacts with ATF5; the ATF5:PCNT:polyglutamylated tubulin (PGT) tripartite unites the mother centriole and the pericentriolar material (PCM) in the centrosome. In terms of tissue distribution, ubiquitously expressed.

The protein localises to the cytoplasm. Its subcellular location is the cytoskeleton. It localises to the microtubule organizing center. The protein resides in the centrosome. Functionally, component of the gamma-tubulin ring complex (gTuRC) which mediates microtubule nucleation. The gTuRC regulates the minus-end nucleation of alpha-beta tubulin heterodimers that grow into microtubule protafilaments, a critical step in centrosome duplication and spindle formation. The protein is Gamma-tubulin complex component 4 (TUBGCP4) of Homo sapiens (Human).